A 92-amino-acid chain; its full sequence is Precursor of elicitor peptide 1 (92 aa).

The propeptide occupies 1 to 69 (MEKSDRRSEE…EKEEVVVTSR (69 aa)). The segment at 35–92 (HQDSPTTSSPGTSKQPKEEKEDVTMEKEEVVVTSRATKVKAKQRGKEKVSSGRPGQHN) is disordered. Residues 37–48 (DSPTTSSPGTSK) show a composition bias toward polar residues. The segment covering 49–64 (QPKEEKEDVTMEKEEV) has biased composition (basic and acidic residues).

It belongs to the brassicaceae elicitor peptide family. Interacts with its receptor PEPR1.

Functionally, elicitor of plant defense. Induces the production of plant defensin (PDF1.2) and of H(2)O(2). Promotes resistance to the root fungal pathogen P.irregulare. Triggers the expression of several PROSCOOP genes (e.g. PROSCOOP2, PROSCOOP7, PROSCOOP8, PROSCOOP12 and PROSCOOP13). This chain is Precursor of elicitor peptide 1, found in Arabidopsis thaliana (Mouse-ear cress).